We begin with the raw amino-acid sequence, 779 residues long: Endonuclease MutS2 (779 aa).

328-335 (GPNTGGKT) is an ATP binding site. Positions 704-779 (LDLRGKRYEE…GSGATIVTLG (76 aa)) constitute a Smr domain.

The protein belongs to the DNA mismatch repair MutS family. MutS2 subfamily. In terms of assembly, homodimer. Binds to stalled ribosomes, contacting rRNA.

Its function is as follows. Endonuclease that is involved in the suppression of homologous recombination and thus may have a key role in the control of bacterial genetic diversity. Acts as a ribosome collision sensor, splitting the ribosome into its 2 subunits. Detects stalled/collided 70S ribosomes which it binds and splits by an ATP-hydrolysis driven conformational change. Acts upstream of the ribosome quality control system (RQC), a ribosome-associated complex that mediates the extraction of incompletely synthesized nascent chains from stalled ribosomes and their subsequent degradation. Probably generates substrates for RQC. The protein is Endonuclease MutS2 of Streptococcus agalactiae serotype Ia (strain ATCC 27591 / A909 / CDC SS700).